The primary structure comprises 858 residues: Ubiquitin carboxyl-terminal hydrolase 13 (858 aa).

Position 112 is a phosphoserine (Ser112). The UBP-type; degenerate zinc-finger motif lies at 185-293 (PVSKYANNLV…KHLAHFGIDM (109 aa)). 4 residues coordinate Zn(2+): Cys209, Cys212, Cys229, and His242. A Glycyl lysine isopeptide (Lys-Gly) (interchain with G-Cter in SUMO2) cross-link involves residue Lys309. In terms of domain architecture, USP spans 334–856 (TGLKNLGNSC…LGYMYFYRRI (523 aa)). Cys343 acts as the Nucleophile in catalysis. Residue Lys403 forms a Glycyl lysine isopeptide (Lys-Gly) (interchain with G-Cter in SUMO2) linkage. 2 consecutive UBA domains span residues 650–691 (DIDE…IIVH) and 722–762 (QPPE…IFSH). His818 (proton acceptor) is an active-site residue.

It belongs to the peptidase C19 family. In terms of assembly, interacts with UFD1. Interacts (via UBA domains) with SIAH2 (when ubiquitinated). Interacts with BAG6; the interaction is direct and may mediate UBL4A deubiquitination. Interacts (via UBA 2 domain) with AMFR; the interaction is direct. Interacts with UBL4A; may be indirect via BAG6. Interacts with NEDD4.

The protein localises to the cytoplasm. The catalysed reaction is Thiol-dependent hydrolysis of ester, thioester, amide, peptide and isopeptide bonds formed by the C-terminal Gly of ubiquitin (a 76-residue protein attached to proteins as an intracellular targeting signal).. Its activity is regulated as follows. Specifically inhibited by spautin-1 (specific and potent autophagy inhibitor-1), a derivative of MBCQ that binds to USP13 and inhibits deubiquitinase activity. Regulated by PIK3C3/VPS34-containing complexes. The weak deubiquitinase activity in vitro suggests the existence of some mechanism that activates the enzyme. Deubiquitinase that mediates deubiquitination of target proteins such as BECN1, MITF, SKP2 and USP10 and is involved in various processes such as autophagy, endoplasmic reticulum-associated degradation (ERAD), cell cycle progression or DNA damage response. Component of a regulatory loop that controls autophagy and p53/TP53 levels: mediates deubiquitination of BECN1, a key regulator of autophagy, leading to stabilize the PIK3C3/VPS34-containing complexes. Alternatively, forms with NEDD4 a deubiquitination complex, which subsequently stabilizes VPS34 to promote autophagy. Also deubiquitinates USP10, an essential regulator of p53/TP53 stability. In turn, PIK3C3/VPS34-containing complexes regulate USP13 stability, suggesting the existence of a regulatory system by which PIK3C3/VPS34-containing complexes regulate p53/TP53 protein levels via USP10 and USP13. Recruited by nuclear UFD1 and mediates deubiquitination of SKP2, thereby regulating endoplasmic reticulum-associated degradation (ERAD). Also regulates ERAD through the deubiquitination of UBL4A a component of the BAG6/BAT3 complex. Mediates stabilization of SIAH2 independently of deubiquitinase activity: binds ubiquitinated SIAH2 and acts by impairing SIAH2 autoubiquitination. Regulates the cell cycle progression by stabilizing cell cycle proteins such as SKP2 and AURKB. In addition, plays an important role in maintaining genomic stability and in DNA replication checkpoint activation via regulation of RAP80 and TOPBP1. Deubiquitinates the multifunctional protein HMGB1 and subsequently drives its nucleocytoplasmic localization and its secretion. Positively regulates type I and type II interferon signalings by deubiquitinating STAT1 but negatively regulates antiviral response by deubiquitinating STING1. The chain is Ubiquitin carboxyl-terminal hydrolase 13 (Usp13) from Mus musculus (Mouse).